We begin with the raw amino-acid sequence, 218 residues long: Eukaryotic translation initiation factor 3 subunit K (218 aa).

An N-acetylalanine modification is found at Ala-2. Thr-28 is modified (phosphothreonine). The PCI domain maps to 42–204 (YDLEANLAVL…SIKPKNIVEK (163 aa)). The residue at position 217 (Ser-217) is a Phosphoserine.

Component of the eukaryotic translation initiation factor 3 (eIF-3) complex, which is composed of 13 subunits: EIF3A, EIF3B, EIF3C, EIF3D, EIF3E, EIF3F, EIF3G, EIF3H, EIF3I, EIF3J, EIF3K, EIF3L and EIF3M. The eIF-3 complex appears to include 3 stable modules: module A is composed of EIF3A, EIF3B, EIF3G and EIF3I; module B is composed of EIF3F, EIF3H, and EIF3M; and module C is composed of EIF3C, EIF3D, EIF3E, EIF3K and EIF3L. EIF3C of module C binds EIF3B of module A and EIF3H of module B, thereby linking the three modules. EIF3J is a labile subunit that binds to the eIF-3 complex via EIF3B. The eIF-3 complex interacts with RPS6KB1 under conditions of nutrient depletion. Mitogenic stimulation leads to binding and activation of a complex composed of MTOR and RPTOR, leading to phosphorylation and release of RPS6KB1 and binding of EIF4B to eIF-3. Interacts with CCND3, but not with CCND1 and CCND2. Ubiquitous, with the highest levels of expression in brain, testis and kidney.

It localises to the nucleus. Its subcellular location is the cytoplasm. Its function is as follows. Component of the eukaryotic translation initiation factor 3 (eIF-3) complex, which is required for several steps in the initiation of protein synthesis. The eIF-3 complex associates with the 40S ribosome and facilitates the recruitment of eIF-1, eIF-1A, eIF-2:GTP:methionyl-tRNAi and eIF-5 to form the 43S pre-initiation complex (43S PIC). The eIF-3 complex stimulates mRNA recruitment to the 43S PIC and scanning of the mRNA for AUG recognition. The eIF-3 complex is also required for disassembly and recycling of post-termination ribosomal complexes and subsequently prevents premature joining of the 40S and 60S ribosomal subunits prior to initiation. The eIF-3 complex specifically targets and initiates translation of a subset of mRNAs involved in cell proliferation, including cell cycling, differentiation and apoptosis, and uses different modes of RNA stem-loop binding to exert either translational activation or repression. The polypeptide is Eukaryotic translation initiation factor 3 subunit K (Homo sapiens (Human)).